The sequence spans 186 residues: Negative modulator of initiation of replication (186 aa).

This sequence belongs to the SeqA family. Homodimer. Polymerizes to form helical filaments.

The protein localises to the cytoplasm. Its function is as follows. Negative regulator of replication initiation, which contributes to regulation of DNA replication and ensures that replication initiation occurs exactly once per chromosome per cell cycle. Binds to pairs of hemimethylated GATC sequences in the oriC region, thus preventing assembly of replication proteins and re-initiation at newly replicated origins. Repression is relieved when the region becomes fully methylated. This is Negative modulator of initiation of replication from Haemophilus ducreyi (strain 35000HP / ATCC 700724).